We begin with the raw amino-acid sequence, 418 residues long: Voltage-gated ClC-type chloride channel ClcB (418 aa).

10 helical membrane passes run 5–25 (LLIA…FRHA), 54–74 (LLTP…WQKF), 146–166 (LWIA…PLAG), 168–188 (LFIA…PVII), 222–242 (ALII…LTLM), 258–278 (WQLA…PAVW), 291–311 (APPL…AVLA), 316–336 (GAPG…GMLY), 352–372 (LLLG…APIM), and 380–400 (MTGE…ASVI).

The protein belongs to the chloride channel (TC 2.A.49) family. ClcB subfamily.

Its subcellular location is the cell inner membrane. Probably acts as an electrical shunt for an outwardly-directed proton pump that is linked to amino acid decarboxylation, as part of the extreme acid resistance (XAR) response. This Escherichia coli O17:K52:H18 (strain UMN026 / ExPEC) protein is Voltage-gated ClC-type chloride channel ClcB.